The following is a 946-amino-acid chain: Bifunctional glutamine synthetase adenylyltransferase/adenylyl-removing enzyme (946 aa).

Residues 1–440 (MKPLSSPLQQ…VFNELIGDDE (440 aa)) form an adenylyl removase region. The segment at 449 to 946 (SEQWRELWQD…ASWQKWLVEE (498 aa)) is adenylyl transferase.

The protein belongs to the GlnE family. Requires Mg(2+) as cofactor.

The catalysed reaction is [glutamine synthetase]-O(4)-(5'-adenylyl)-L-tyrosine + phosphate = [glutamine synthetase]-L-tyrosine + ADP. It carries out the reaction [glutamine synthetase]-L-tyrosine + ATP = [glutamine synthetase]-O(4)-(5'-adenylyl)-L-tyrosine + diphosphate. Involved in the regulation of glutamine synthetase GlnA, a key enzyme in the process to assimilate ammonia. When cellular nitrogen levels are high, the C-terminal adenylyl transferase (AT) inactivates GlnA by covalent transfer of an adenylyl group from ATP to specific tyrosine residue of GlnA, thus reducing its activity. Conversely, when nitrogen levels are low, the N-terminal adenylyl removase (AR) activates GlnA by removing the adenylyl group by phosphorolysis, increasing its activity. The regulatory region of GlnE binds the signal transduction protein PII (GlnB) which indicates the nitrogen status of the cell. This is Bifunctional glutamine synthetase adenylyltransferase/adenylyl-removing enzyme from Shigella boydii serotype 4 (strain Sb227).